Reading from the N-terminus, the 101-residue chain is Urease subunit beta (101 aa).

This sequence belongs to the urease beta subunit family. Heterotrimer of UreA (gamma), UreB (beta) and UreC (alpha) subunits. Three heterotrimers associate to form the active enzyme.

The protein resides in the cytoplasm. It carries out the reaction urea + 2 H2O + H(+) = hydrogencarbonate + 2 NH4(+). The protein operates within nitrogen metabolism; urea degradation; CO(2) and NH(3) from urea (urease route): step 1/1. The sequence is that of Urease subunit beta from Dinoroseobacter shibae (strain DSM 16493 / NCIMB 14021 / DFL 12).